The chain runs to 154 residues: Deoxyuridine 5'-triphosphate nucleotidohydrolase (154 aa).

Substrate-binding positions include arginine 74 to glycine 76, asparagine 87, threonine 91 to aspartate 93, and lysine 101.

It belongs to the dUTPase family. Mg(2+) serves as cofactor.

It carries out the reaction dUTP + H2O = dUMP + diphosphate + H(+). The protein operates within pyrimidine metabolism; dUMP biosynthesis; dUMP from dCTP (dUTP route): step 2/2. Its function is as follows. This enzyme is involved in nucleotide metabolism: it produces dUMP, the immediate precursor of thymidine nucleotides and it decreases the intracellular concentration of dUTP so that uracil cannot be incorporated into DNA. The polypeptide is Deoxyuridine 5'-triphosphate nucleotidohydrolase (Cytophaga hutchinsonii (strain ATCC 33406 / DSM 1761 / CIP 103989 / NBRC 15051 / NCIMB 9469 / D465)).